An 88-amino-acid chain; its full sequence is ATP synthase subunit 9, mitochondrial (88 aa).

2 consecutive transmembrane segments (helical) span residues 30 to 50 (IGLT…ILAV) and 66 to 86 (LGFA…FLIL).

Belongs to the ATPase C chain family. In terms of assembly, F-type ATPases have 2 components, CF(1) - the catalytic core - and CF(0) - the membrane proton channel. CF(1) has five subunits: alpha(3), beta(3), gamma(1), delta(1), epsilon(1). CF(0) has three main subunits: a, b and c.

Its subcellular location is the mitochondrion membrane. Functionally, mitochondrial membrane ATP synthase (F(1)F(0) ATP synthase or Complex V) produces ATP from ADP in the presence of a proton gradient across the membrane which is generated by electron transport complexes of the respiratory chain. F-type ATPases consist of two structural domains, F(1) - containing the extramembraneous catalytic core and F(0) - containing the membrane proton channel, linked together by a central stalk and a peripheral stalk. During catalysis, ATP synthesis in the catalytic domain of F(1) is coupled via a rotary mechanism of the central stalk subunits to proton translocation. Part of the complex F(0) domain. A homomeric c-ring of probably 10 subunits is part of the complex rotary element. This chain is ATP synthase subunit 9, mitochondrial (atp9), found in Dictyostelium citrinum (Slime mold).